A 733-amino-acid chain; its full sequence is Arginine decarboxylase 1A, chloroplastic (733 aa).

A chloroplast-targeting transit peptide spans 1–44 (MPALGCCVDAAVSPPPGYSFLWDSSLPAPEIFPSGVPPSTNTAV). Position 157 is an N6-(pyridoxal phosphate)lysine (Lys-157). Residues Ser-309, Gly-346, and 395-398 (ESGR) each bind pyridoxal 5'-phosphate. A substrate-binding site is contributed by 460-461 (YA). Cys-548 functions as the Proton donor; shared with dimeric partner in the catalytic mechanism. Asp-549 contacts substrate. Residue Tyr-592 participates in pyridoxal 5'-phosphate binding.

The protein belongs to the Orn/Lys/Arg decarboxylase class-II family. SpeA subfamily. As to quaternary structure, interacts, via its C-terminal internal region, with the tobacco mosaic virus (TMV) replicase helicase region. The cofactor is Mg(2+). Requires pyridoxal 5'-phosphate as cofactor.

The protein resides in the plastid. Its subcellular location is the chloroplast. The catalysed reaction is L-arginine + H(+) = agmatine + CO2. Its pathway is alkaloid biosynthesis; nicotine biosynthesis. It functions in the pathway amine and polyamine biosynthesis; agmatine biosynthesis; agmatine from L-arginine: step 1/1. Its function is as follows. Involved in the biosynthesis of pyridine alkaloid natural products, leading mainly to the production of anabasine, anatabine, nicotine and nornicotine, effective deterrents against herbivores with antiparasitic and pesticide properties (neurotoxins); nornicotine serves as the precursor in the synthesis of the carcinogen compound N'-nitrosonornicotine (NNN). Required for the biosynthesis of putrescine. Catalyzes the first step of polyamine (PA) biosynthesis to produce putrescine from arginine. The sequence is that of Arginine decarboxylase 1A, chloroplastic from Nicotiana tabacum (Common tobacco).